The following is a 341-amino-acid chain: Phosphate acyltransferase (341 aa).

Belongs to the PlsX family. As to quaternary structure, homodimer. Probably interacts with PlsY.

The protein localises to the cytoplasm. The catalysed reaction is a fatty acyl-[ACP] + phosphate = an acyl phosphate + holo-[ACP]. Its pathway is lipid metabolism; phospholipid metabolism. Catalyzes the reversible formation of acyl-phosphate (acyl-PO(4)) from acyl-[acyl-carrier-protein] (acyl-ACP). This enzyme utilizes acyl-ACP as fatty acyl donor, but not acyl-CoA. This chain is Phosphate acyltransferase, found in Vibrio campbellii (strain ATCC BAA-1116).